A 503-amino-acid polypeptide reads, in one-letter code: Anthranilate synthase component 1 3 (503 aa).

269-271 contacts L-tryptophan; the sequence is PYS. 304–305 is a chorismate binding site; it reads GT. Glu331 provides a ligand contact to Mg(2+). Residues Tyr419, Arg439, 453–455, and Gly455 contribute to the chorismate site; that span reads GSG. Position 468 (Glu468) interacts with Mg(2+).

It belongs to the anthranilate synthase component I family. Tetramer of two components I and two components II. Mg(2+) is required as a cofactor.

It catalyses the reaction chorismate + L-glutamine = anthranilate + pyruvate + L-glutamate + H(+). It functions in the pathway amino-acid biosynthesis; L-tryptophan biosynthesis; L-tryptophan from chorismate: step 1/5. This chain is Anthranilate synthase component 1 3 (trpE3), found in Haloarcula marismortui (strain ATCC 43049 / DSM 3752 / JCM 8966 / VKM B-1809) (Halobacterium marismortui).